Here is a 215-residue protein sequence, read N- to C-terminus: MTLRSKILVNKNVLPTAEQALPGRETPMALPETHFVNGNPLLGPFSSNVEFAIFGLGCFWGAERRLWQQEGVVSTVVGYAGGFTPNPTYEEVCSGLTAHTEVVLVVYEPEKISYKSLLKVFWEAHNPTQGMRQGNDIGTQYRSVIYCTTPKQLDAAKASAAEFQAELRKAGLGAITTEIEEAPTVYFAEAYHQQYLAKNPQGYCGLGGTGVCLPA.

Residue cysteine 58 is part of the active site.

This sequence belongs to the MsrA Met sulfoxide reductase family.

It carries out the reaction L-methionyl-[protein] + [thioredoxin]-disulfide + H2O = L-methionyl-(S)-S-oxide-[protein] + [thioredoxin]-dithiol. It catalyses the reaction [thioredoxin]-disulfide + L-methionine + H2O = L-methionine (S)-S-oxide + [thioredoxin]-dithiol. In terms of biological role, has an important function as a repair enzyme for proteins that have been inactivated by oxidation. Catalyzes the reversible oxidation-reduction of methionine sulfoxide in proteins to methionine. This chain is Peptide methionine sulfoxide reductase MsrA, found in Pseudomonas savastanoi pv. phaseolicola (strain 1448A / Race 6) (Pseudomonas syringae pv. phaseolicola (strain 1448A / Race 6)).